The sequence spans 358 residues: Heme A synthase 1 (358 aa).

A run of 5 helical transmembrane segments spans residues 11 to 31 (LVGTWLLVICFMIFGMVVGGG), 98 to 117 (WGRLMAVVFLVPLAVFRLRG), 123 to 143 (LTAWLLFLFGLGAGEATMGWY), 159 to 179 (LYLGPHFVLAMLIFTAMLWTA), and 199 to 219 (LLSVSIGLIIATIGLGALVAA). His262 contributes to the heme binding site. 3 helical membrane passes run 264–284 (VAATVTAIVVVIAAAMGLRAP), 292–312 (LFLLLAGLVSLQYILGMSTLV), and 315–335 (MAELGYVHELNAVLLLAACIA). His322 contacts heme.

Belongs to the COX15/CtaA family. Type 2 subfamily. In terms of assembly, interacts with CtaB. Heme b is required as a cofactor.

It is found in the cell membrane. The enzyme catalyses Fe(II)-heme o + 2 A + H2O = Fe(II)-heme a + 2 AH2. The protein operates within porphyrin-containing compound metabolism; heme A biosynthesis; heme A from heme O: step 1/1. In terms of biological role, catalyzes the conversion of heme O to heme A by two successive hydroxylations of the methyl group at C8. The first hydroxylation forms heme I, the second hydroxylation results in an unstable dihydroxymethyl group, which spontaneously dehydrates, resulting in the formyl group of heme A. The chain is Heme A synthase 1 from Acidiphilium cryptum (strain JF-5).